The chain runs to 249 residues: Triosephosphate isomerase (249 aa).

Positions 12 and 14 each coordinate substrate. Lys14 is modified (N6-acetyllysine). Tyr68 carries the post-translational modification 3'-nitrotyrosine. Position 80 is a phosphoserine (Ser80). The active-site Electrophile is His96. The residue at position 106 (Ser106) is a Phosphoserine. Lys142 participates in a covalent cross-link: Glycyl lysine isopeptide (Lys-Gly) (interchain with G-Cter in SUMO1). An N6-succinyllysine modification is found at Lys149. Lys156 carries the post-translational modification N6-acetyllysine; alternate. Lys156 bears the N6-succinyllysine; alternate mark. Ser159 is modified (phosphoserine). Glu166 acts as the Proton acceptor in catalysis. A Phosphothreonine modification is found at Thr173. An N6-acetyllysine; alternate modification is found at Lys194. Lys194 is subject to N6-succinyllysine; alternate. An N6-methyllysine; alternate modification is found at Lys194. Residue Ser198 is modified to Phosphoserine. Residue Tyr209 is modified to 3'-nitrotyrosine. At Ser212 the chain carries Phosphoserine. A Phosphothreonine modification is found at Thr214. Phosphoserine is present on Ser223. Residue Lys238 is modified to N6-acetyllysine.

The protein belongs to the triosephosphate isomerase family. In terms of assembly, homodimer.

The protein resides in the cytoplasm. The catalysed reaction is dihydroxyacetone phosphate = methylglyoxal + phosphate. It catalyses the reaction D-glyceraldehyde 3-phosphate = dihydroxyacetone phosphate. Its pathway is carbohydrate degradation; glycolysis; D-glyceraldehyde 3-phosphate from glycerone phosphate: step 1/1. It participates in carbohydrate biosynthesis; gluconeogenesis. Triosephosphate isomerase is an extremely efficient metabolic enzyme that catalyzes the interconversion between dihydroxyacetone phosphate (DHAP) and D-glyceraldehyde-3-phosphate (G3P) in glycolysis and gluconeogenesis. Functionally, it is also responsible for the non-negligible production of methylglyoxal a reactive cytotoxic side-product that modifies and can alter proteins, DNA and lipids. The sequence is that of Triosephosphate isomerase (TPI1) from Bos taurus (Bovine).